We begin with the raw amino-acid sequence, 170 residues long: Arginine repressor (170 aa).

The protein belongs to the ArgR family.

The protein localises to the cytoplasm. Its pathway is amino-acid biosynthesis; L-arginine biosynthesis [regulation]. Functionally, regulates arginine biosynthesis genes. The chain is Arginine repressor from Bifidobacterium longum (strain NCC 2705).